A 462-amino-acid chain; its full sequence is Sodium-coupled neutral amino acid transporter 7 (462 aa).

Position 28 is a phosphoserine (serine 28). Transmembrane regions (helical) follow at residues 56-76, 82-102, 130-150, 178-198, 205-225, 239-259, 282-302, 319-339, 371-391, 395-415, and 428-448; these read AIFI…PAAF, VAAG…GLVI, LCEV…LIII, FTIS…REIG, FLSV…YIWP, ASWM…QCHV, AAMV…FLTF, MAVA…YPIL, VLQT…IPDI, ISVI…LCLI, and ASWW…AFIF.

This sequence belongs to the amino acid/polyamine transporter 2 family. As to quaternary structure, interacts with the mTORC1 complex; this interaction mediates the recruitment of mTORC1 to the lysosome and its subsequent activation.

The protein resides in the lysosome membrane. The protein localises to the cell projection. It is found in the axon. It catalyses the reaction L-asparagine(in) + Na(+)(in) = L-asparagine(out) + Na(+)(out). It carries out the reaction L-glutamine(in) + Na(+)(in) = L-glutamine(out) + Na(+)(out). Symporter that selectively cotransports sodium ions and amino acids, such as L-glutamine and L-asparagine from the lysosome into the cytoplasm and may participates in mTORC1 activation. The transport activity requires an acidic lysosomal lumen. The polypeptide is Sodium-coupled neutral amino acid transporter 7 (Homo sapiens (Human)).